A 150-amino-acid polypeptide reads, in one-letter code: uncharacterized protein (150 aa).

Residues 1–28 (MPLDVWIAFSYFIDFFQWLFMLNAEVMR) form the signal peptide.

This is an uncharacterized protein from Archaeoglobus fulgidus (strain ATCC 49558 / DSM 4304 / JCM 9628 / NBRC 100126 / VC-16).